The chain runs to 383 residues: Large ribosomal subunit protein uL3 (383 aa).

The protein belongs to the universal ribosomal protein uL3 family.

It is found in the cytoplasm. The sequence is that of Large ribosomal subunit protein uL3 (RPL3-1) from Encephalitozoon cuniculi (strain GB-M1) (Microsporidian parasite).